A 603-amino-acid polypeptide reads, in one-letter code: Bifunctional 3-dehydroquinate dehydratase/shikimate dehydrogenase, chloroplastic (603 aa).

The span at 1–10 (MAASSTNARL) shows a compositional bias: polar residues. Residues 1-22 (MAASSTNARLTNPPRLLSKPRL) form a disordered region. The transit peptide at 1–66 (MAASSTNARL…VVFSDQRRRR (66 aa)) directs the protein to the chloroplast. Over residues 13-22 (PPRLLSKPRL) the composition is skewed to low complexity. The 3-dehydroquinate dehydratase stretch occupies residues 96-313 (ICAPVMADSI…QPTIKDLLDL (218 aa)). Residues E124, R126, and R155 each coordinate 3-dehydroshikimate. H214 acts as the Proton acceptor; for 3-dehydroquinate dehydratase activity in catalysis. 4 residues coordinate 3-dehydroshikimate: K241, R279, S300, and Q304. The active-site Schiff-base intermediate with substrate; for 3-dehydroquinate dehydratase activity is K241. Positions 328–558 (IIGKPVSHSK…VYTPRITRLL (231 aa)) are shikimate dehydrogenase. Positions 336, 338, 381, 385, 406, and 423 each coordinate shikimate. K385 serves as the catalytic For shikimate dehydrogenase activity. The For shikimate dehydrogenase activity role is filled by D423. NADP(+) is bound by residues A461, G463, A464, N483, T485, R488, M525, and A548. Y550 serves as a coordination point for shikimate. G571 contacts NADP(+). Residues Q578 and Q582 each coordinate shikimate.

This sequence in the N-terminal section; belongs to the type-I 3-dehydroquinase family. In the C-terminal section; belongs to the shikimate dehydrogenase family. As to quaternary structure, monomer.

The protein resides in the plastid. It is found in the chloroplast. The enzyme catalyses 3-dehydroquinate = 3-dehydroshikimate + H2O. It carries out the reaction shikimate + NADP(+) = 3-dehydroshikimate + NADPH + H(+). The protein operates within metabolic intermediate biosynthesis; chorismate biosynthesis; chorismate from D-erythrose 4-phosphate and phosphoenolpyruvate: step 3/7. Its pathway is metabolic intermediate biosynthesis; chorismate biosynthesis; chorismate from D-erythrose 4-phosphate and phosphoenolpyruvate: step 4/7. Functionally, bifunctional dehydroquinate dehydratase-shikimate dehydrogenase enzyme that catalyzes two steps in the chorismate biosynthesis pathway. The polypeptide is Bifunctional 3-dehydroquinate dehydratase/shikimate dehydrogenase, chloroplastic (Arabidopsis thaliana (Mouse-ear cress)).